The sequence spans 227 residues: Paired immunoglobulin-like type 2 receptor beta (227 aa).

An N-terminal signal peptide occupies residues 1-19 (MGRPLLLPLLLLLQPPAFL). The Extracellular portion of the chain corresponds to 20 to 191 (QPGGSTGSGP…WHLSLDTAIR (172 aa)). Positions 21–143 (PGGSTGSGPS…SGRQQLQSIK (123 aa)) constitute an Ig-like V-type domain. Asparagine 100 carries N-linked (GlcNAc...) asparagine glycosylation. A helical membrane pass occupies residues 192 to 212 (VALAVAVLKTVILGLLCLLLL). The Cytoplasmic portion of the chain corresponds to 213-227 (WWRRRKGSRAPSSDF).

The protein resides in the membrane. In terms of biological role, paired receptors consist of highly related activating and inhibitory receptors and are widely involved in the regulation of the immune system. PILRB is thought to act as a cellular signaling activating receptor that associates with ITAM-bearing adapter molecules on the cell surface. The sequence is that of Paired immunoglobulin-like type 2 receptor beta (PILRB) from Homo sapiens (Human).